The primary structure comprises 131 residues: Agouti-signaling protein (131 aa).

The signal sequence occupies residues 1–22; sequence MDVTRLLLATLVGFLCFLTVHS. Asparagine 39 carries N-linked (GlcNAc...) asparagine glycosylation. The tract at residues 58–96 is disordered; the sequence is KSKKISRKEAEKRKRSSKKKASIKKVARPPPPSPCVATR. The span at 70-84 shows a compositional bias: basic residues; that stretch reads RKRSSKKKASIKKVA. Intrachain disulfides connect cysteine 92/cysteine 107, cysteine 99/cysteine 113, cysteine 106/cysteine 124, cysteine 110/cysteine 131, and cysteine 115/cysteine 122. The Agouti domain maps to 92–131; sequence CVATRDSCKPPAPACCNPCASCQCRFFGSACTCRVLNPNC.

Its subcellular location is the secreted. Functionally, involved in the regulation of melanogenesis. The binding of ASP to MC1R precludes alpha-MSH initiated signaling and thus blocks production of cAMP, leading to a down-regulation of eumelanogenesis (brown/black pigment) and thus increasing synthesis of pheomelanin (yellow/red pigment). The polypeptide is Agouti-signaling protein (Rattus norvegicus (Rat)).